Reading from the N-terminus, the 377-residue chain is Ribosomal RNA large subunit methyltransferase G (377 aa).

This sequence belongs to the methyltransferase superfamily. RlmG family.

It localises to the cytoplasm. The enzyme catalyses guanosine(1835) in 23S rRNA + S-adenosyl-L-methionine = N(2)-methylguanosine(1835) in 23S rRNA + S-adenosyl-L-homocysteine + H(+). Its function is as follows. Specifically methylates the guanine in position 1835 (m2G1835) of 23S rRNA. This chain is Ribosomal RNA large subunit methyltransferase G, found in Streptomyces coelicolor (strain ATCC BAA-471 / A3(2) / M145).